The following is a 288-amino-acid chain: MGHTRRQGTSPSKCPYLNFFQLLVLAGLSHFCSGVIHVTKEVKEVATLSCGHNVSVEELAQTRIYWQKEKKMVLTMMSGDMNIWPEYKNRTIFDITNNLSIVILALRPSDEGTYECVVLKYEKDAFKREHLAEVTLSVKADFPTPSISDFEIPTSNIRRIICSTSGGFPEPHLSWLENGEELNAINTTVSQDPETELYAVSSKLDFNMTTNHSFMCLIKYGHLRVNQTFNWNTTKQEHFPDNLLPSWAITLISVNGIFVICCLTYCFAPRCRERRRNERLRRESVRPV.

Residues 1–34 form the signal peptide; sequence MGHTRRQGTSPSKCPYLNFFQLLVLAGLSHFCSG. Residues 35 to 135 form the Ig-like V-type domain; sequence VIHVTKEVKE…FKREHLAEVT (101 aa). The Extracellular portion of the chain corresponds to 35–242; the sequence is VIHVTKEVKE…TTKQEHFPDN (208 aa). Cystine bridges form between Cys50-Cys116 and Cys162-Cys216. Asn53, Asn89, Asn98, Asn186, Asn207, Asn211, Asn226, and Asn232 each carry an N-linked (GlcNAc...) asparagine glycan. Residues 145–230 form the Ig-like C2-type domain; it reads PSISDFEIPT…GHLRVNQTFN (86 aa). The chain crosses the membrane as a helical span at residues 243–263; sequence LLPSWAITLISVNGIFVICCL. Residues Cys261, Cys262, Cys266, and Cys271 are each lipidated (S-palmitoyl cysteine). Topologically, residues 264–288 are cytoplasmic; that stretch reads TYCFAPRCRERRRNERLRRESVRPV. The residue at position 284 (Ser284) is a Phosphoserine.

Homodimer. Interacts with CTLA4; this interaction inhibits T-cell activation. Interacts with PDL1/CD274; this interaction blocks PDL1/PDCD1 binding and thus PDL1/CD274 inhibitory function. Interacts with CD28. In terms of assembly, (Microbial infection) Interacts with adenovirus subgroup B fiber proteins. As to quaternary structure, (Microbial infection) Interacts with Orthopoxvirus OPG038/M2 protein, inhibiting the interaction with CTLA4/CD152. Palmitoylated by ZDHHC20; palmitoylation protects CD80 from ubiquitin-mediated degradation, regulating the protein stability, and ensures its accurate plasma membrane localization. As to expression, expressed on activated B-cells, macrophages and dendritic cells.

It is found in the cell membrane. Functionally, costimulatory molecule that belongs to the immunoglobulin superfamily that plays an important role in T-lymphocyte activation. Acts as the primary auxiliary signal augmenting the MHC/TCR signal in naive T-cells together with the CD28 receptor which is constitutively expressed on the cell surface of T-cells. In turn, activates different signaling pathways such as NF-kappa-B or MAPK leading to the production of different cytokines. In addition, CD28/CD80 costimulatory signal stimulates glucose metabolism and ATP synthesis of T-cells by activating the PI3K/Akt signaling pathway. Also acts as a regulator of PDL1/PDCD1 interactions to limit excess engagement of PDL1 and its inhibitory role in immune responses. Expressed on B-cells, plays a critical role in regulating interactions between B-cells and T-cells in both early and late germinal center responses, which are crucial for the generation of effective humoral immune responses. Its function is as follows. (Microbial infection) Acts as a receptor for adenovirus subgroup B. The polypeptide is T-lymphocyte activation antigen CD80 (CD80) (Homo sapiens (Human)).